The primary structure comprises 248 residues: Ubiquinone/menaquinone biosynthesis C-methyltransferase UbiE (248 aa).

Residues S68 and D92 each coordinate S-adenosyl-L-methionine.

The protein belongs to the class I-like SAM-binding methyltransferase superfamily. MenG/UbiE family.

It carries out the reaction a 2-demethylmenaquinol + S-adenosyl-L-methionine = a menaquinol + S-adenosyl-L-homocysteine + H(+). It catalyses the reaction a 2-methoxy-6-(all-trans-polyprenyl)benzene-1,4-diol + S-adenosyl-L-methionine = a 5-methoxy-2-methyl-3-(all-trans-polyprenyl)benzene-1,4-diol + S-adenosyl-L-homocysteine + H(+). Its pathway is quinol/quinone metabolism; menaquinone biosynthesis; menaquinol from 1,4-dihydroxy-2-naphthoate: step 2/2. It functions in the pathway cofactor biosynthesis; ubiquinone biosynthesis. Its function is as follows. Methyltransferase required for the conversion of demethylmenaquinol (DMKH2) to menaquinol (MKH2) and the conversion of 2-polyprenyl-6-methoxy-1,4-benzoquinol (DDMQH2) to 2-polyprenyl-3-methyl-6-methoxy-1,4-benzoquinol (DMQH2). In Rickettsia africae (strain ESF-5), this protein is Ubiquinone/menaquinone biosynthesis C-methyltransferase UbiE.